The sequence spans 80 residues: DNA-binding protein HU-like (80 aa).

Belongs to the bacterial histone-like protein family.

Functionally, histone-like DNA-binding protein which is capable of wrapping DNA to stabilize it, and thus to prevent its denaturation under extreme environmental conditions. This is DNA-binding protein HU-like from Rickettsia prowazekii (strain Madrid E).